Here is a 418-residue protein sequence, read N- to C-terminus: Glutamyl-tRNA reductase (418 aa).

Substrate is bound by residues threonine 49–arginine 52, serine 105, glutamate 110–glutamine 112, and glutamine 116. The active-site Nucleophile is cysteine 50. An NADP(+)-binding site is contributed by glycine 185–isoleucine 190.

It belongs to the glutamyl-tRNA reductase family. In terms of assembly, homodimer.

The enzyme catalyses (S)-4-amino-5-oxopentanoate + tRNA(Glu) + NADP(+) = L-glutamyl-tRNA(Glu) + NADPH + H(+). It participates in porphyrin-containing compound metabolism; protoporphyrin-IX biosynthesis; 5-aminolevulinate from L-glutamyl-tRNA(Glu): step 1/2. Its function is as follows. Catalyzes the NADPH-dependent reduction of glutamyl-tRNA(Glu) to glutamate 1-semialdehyde (GSA). This chain is Glutamyl-tRNA reductase, found in Aromatoleum aromaticum (strain DSM 19018 / LMG 30748 / EbN1) (Azoarcus sp. (strain EbN1)).